The sequence spans 554 residues: Bifunctional epoxide hydrolase 2 (554 aa).

Residues 1-224 (MALRVAAFDL…KVTGTQFPEA (224 aa)) form a phosphatase region. Mg(2+)-binding residues include Asp9 and Asp11. Lys55 is modified (N6-succinyllysine). 123–124 (TN) is a phosphate binding site. The residue at position 176 (Lys176) is an N6-acetyllysine; alternate. Residue Lys176 is modified to N6-succinyllysine; alternate. A Mg(2+)-binding site is contributed by Asp185. N6-acetyllysine is present on residues Lys191 and Lys215. An epoxide hydrolase region spans residues 233–554 (NDVSHGYVTV…IQNPSVTSKI (322 aa)). Residues 257–530 (PAICLCHGFP…CGHWTQIEKP (274 aa)) enclose the AB hydrolase-1 domain. The Nucleophile role is filled by Asp333. At Ser368 the chain carries Phosphoserine. Tyr381 is a binding site for substrate. An N6-succinyllysine mark is found at Lys420 and Lys454. Tyr465 acts as the Proton donor in catalysis. Lys504 bears the N6-succinyllysine mark. The S-(15-deoxy-Delta12,14-prostaglandin J2-9-yl)cysteine moiety is linked to residue Cys521. The active-site Proton acceptor is the His523. The Microbody targeting signal motif lies at 552–554 (SKI). Lys553 carries the post-translational modification N6-succinyllysine.

The protein belongs to the AB hydrolase superfamily. Epoxide hydrolase family. In terms of assembly, homodimer. Mg(2+) is required as a cofactor. The covalent modification of cysteine by 15-deoxy-Delta12,14-prostaglandin-J2 is autocatalytic and reversible. It may occur as an alternative to other cysteine modifications, such as S-nitrosylation and S-palmitoylation.

It is found in the cytoplasm. Its subcellular location is the peroxisome. The catalysed reaction is an epoxide + H2O = an ethanediol. It carries out the reaction (9S,10S)-10-hydroxy-9-(phosphooxy)octadecanoate + H2O = (9S,10S)-9,10-dihydroxyoctadecanoate + phosphate. The enzyme catalyses 8-hydroxy-(11S,12S)-epoxy-(5Z,9E,14Z)-eicosatrienoate + H2O = (8,11R,12S)-trihydroxy-(5Z,9E,14Z)-eicosatrienoate. It catalyses the reaction 10-hydroxy-(11S,12S)-epoxy- (5Z,8Z,14Z)-eicosatrienoate + H2O = (10,11S,12R)-trihydroxy-(5Z,8Z,14Z)-eicosatrienoate. The catalysed reaction is 12-phosphooxy-(9Z)-octadecenoate + H2O = 12-hydroxy-(9Z)-octadecenoate + phosphate. It carries out the reaction 12-phosphooxy-(9E)-octadecenoate + H2O = 12-hydroxy-(9E)-octadecenoate + phosphate. The enzyme catalyses 12-(phosphooxy)octadecanoate + H2O = 12-hydroxyoctadecanoate + phosphate. It catalyses the reaction 8,9-epoxy-(5Z,11Z,14Z)-eicosatrienoate + H2O = 8,9-dihydroxy-(5Z,11Z,14Z)-eicosatrienoate. The catalysed reaction is 11,12-epoxy-(5Z,8Z,14Z)-eicosatrienoate + H2O = 11,12-dihydroxy-(5Z,8Z,14Z)-eicosatrienoate. It carries out the reaction 14,15-epoxy-(5Z,8Z,11Z)-eicosatrienoate + H2O = 14,15-dihydroxy-(5Z,8Z,11Z)-eicosatrienoate. The enzyme catalyses 9,10-epoxy-(12Z)-octadecenoate + H2O = 9,10-dihydroxy-(12Z)-octadecenoate. It catalyses the reaction 1-tetradecanoyl-sn-glycerol 3-phosphate + H2O = 1-tetradecanoyl-sn-glycerol + phosphate. The catalysed reaction is 1-octadecanoyl-sn-glycero-3-phosphate + H2O = 1-octadecanoyl-sn-glycerol + phosphate. It carries out the reaction 1-(5Z,8Z,11Z,14Z-eicosatetraenoyl)-sn-glycero-3-phosphate + H2O = 1-(5Z,8Z,11Z,14Z-eicosatetraenoyl)-sn-glycerol + phosphate. The enzyme catalyses 1-hexadecanoyl-sn-glycero-3-phosphate + H2O = 1-hexadecanoyl-sn-glycerol + phosphate. It catalyses the reaction 1-(9Z-octadecenoyl)-sn-glycero-3-phosphate + H2O = 1-(9Z-octadecenoyl)-sn-glycerol + phosphate. The catalysed reaction is (8S,9R)-epoxy-(5Z,11Z,14Z)-eicosatrienoate + H2O = (8S,9S)-dihydroxy-(5Z,11Z,14Z)-eicosatrienoate. It carries out the reaction (11S,12R)-epoxy-(5Z,8Z,14Z)-eicosatrienoate + H2O = (11R,12R)-dihydroxy-(5Z,8Z,14Z)-eicosatrienoate. The enzyme catalyses (11S,12R)-epoxy-(5Z,8Z,14Z)-eicosatrienoate + H2O = (11S,12S)-dihydroxy-(5Z,8Z,14Z)-eicosatrienoate. It catalyses the reaction (14S,15R)-epoxy-(5Z,8Z,11Z)-eicosatrienoate + H2O = (14R,15R)-dihydroxy-(5Z,8Z,11Z)-eicosatrienoate. The catalysed reaction is (14S,15R)-epoxy-(5Z,8Z,11Z)-eicosatrienoate + H2O = (14S,15S)-dihydroxy-(5Z,8Z,11Z)-eicosatrienoate. It carries out the reaction (11R,12S)-epoxy-(5Z,8Z,14Z)-eicosatrienoate + H2O = (11S,12S)-dihydroxy-(5Z,8Z,14Z)-eicosatrienoate. The enzyme catalyses (11R,12S)-epoxy-(5Z,8Z,14Z)-eicosatrienoate + H2O = (11R,12R)-dihydroxy-(5Z,8Z,14Z)-eicosatrienoate. It catalyses the reaction (8S,9R)-epoxy-(5Z,11Z,14Z)-eicosatrienoate + H2O = (8R,9R)-dihydroxy-(5Z,11Z,14Z)-eicosatrienoate. The catalysed reaction is (14R,15S)-epoxy-(5Z,8Z,11Z)-eicosatrienoate + H2O = (14R,15R)-dihydroxy-(5Z,8Z,11Z)-eicosatrienoate. Inhibited by 1-(1-acetylpiperidin-4-yl)-3-(4-(trifl uoromethoxy)phenyl)urea (TPAU), 1-cyclohexyl-3-dodecylurea (CDU), 12-(3-adamantan-1-yl-ureido)-dodecanoic acid (AUDA), 1-((3S, 5S, 7S)-adamantan-1-yl)-3-(5-(2-(2-ethoxyethoxy) ethoxy)pentyl)urea (AEPU), N-adamantyl-N[']-cyclohexyl urea (ACU), 4-(((1S, 4S)-4-(3-((3S, 5S, 7S)-adamantan-1-yl) ureido)cyclohexyl)oxy)benzoic acid (c-AUCB), 4-(((1R, 4R)-4-(3-((3S, 5S, 7S)-adamantan-1-yl)ureido)cyclohexyl)oxy)benzoic acid (t-AUCB), 4-(((1R, 4R)-4-(3-(4(trifluoromethoxy)phenyl)ureido)cyclohexyl)oxy)benzoic acid (t-TAUCB) and to a lesser extent by 8-(3-((3S, 5S, 7S)-adamantan-1-yl)ureido) octanoic acid (AUOA). Phosphatase activity is inhibited by dodecyl-phosphate, phospholipids such as phospho-lysophosphatidic acids and fatty acids such as palmitic acid and lauric acid. In terms of biological role, bifunctional enzyme. The C-terminal domain has epoxide hydrolase activity and acts on epoxides (alkene oxides, oxiranes) and arene oxides. Plays a role in xenobiotic metabolism by degrading potentially toxic epoxides. Also determines steady-state levels of physiological mediators. The N-terminal domain has lipid phosphatase activity, with the highest activity towards threo-9,10-phosphonooxy-hydroxy-octadecanoic acid, followed by erythro-9,10-phosphonooxy-hydroxy-octadecanoic acid, 12-phosphonooxy-octadec-9Z-enoic acid and 12-phosphonooxy-octadec-9E-enoic acid. Functionally, bifunctional enzyme. The C-terminal domain has epoxide hydrolase activity and acts on epoxides (alkene oxides, oxiranes) and arene oxides. Plays a role in xenobiotic metabolism by degrading potentially toxic epoxides. Also determines steady-state levels of physiological mediators. Bifunctional enzyme. The N-terminal domain has lipid phosphatase activity, with the highest activity towards threo-9,10-phosphonooxy-hydroxy-octadecanoic acid, followed by erythro-9,10-phosphonooxy-hydroxy-octadecanoic acid, 12-phosphonooxy-octadec-9Z-enoic acid and 12-phosphonooxy-octadec-9E-enoic acid. Has phosphatase activity toward lyso-glycerophospholipids with also some lower activity toward lysolipids of sphingolipid and isoprenoid phosphates. The polypeptide is Bifunctional epoxide hydrolase 2 (Rattus norvegicus (Rat)).